Here is a 382-residue protein sequence, read N- to C-terminus: UDP-N-acetylenolpyruvoylglucosamine reductase (382 aa).

Residues 50–253 (RVGGPAVLAE…REAVLRLRAS (204 aa)) enclose the FAD-binding PCMH-type domain. R193 is an active-site residue. S270 acts as the Proton donor in catalysis. E374 is a catalytic residue.

This sequence belongs to the MurB family. The cofactor is FAD.

It localises to the cytoplasm. It catalyses the reaction UDP-N-acetyl-alpha-D-muramate + NADP(+) = UDP-N-acetyl-3-O-(1-carboxyvinyl)-alpha-D-glucosamine + NADPH + H(+). The protein operates within cell wall biogenesis; peptidoglycan biosynthesis. Cell wall formation. The sequence is that of UDP-N-acetylenolpyruvoylglucosamine reductase from Nocardia farcinica (strain IFM 10152).